Consider the following 725-residue polypeptide: RNA-directed RNA polymerase (725 aa).

The RdRp catalytic domain occupies 424–544 (PVGIGMDASR…VVERSDEKKV (121 aa)).

Belongs to the tombusviridae RNA polymerase family.

It catalyses the reaction RNA(n) + a ribonucleoside 5'-triphosphate = RNA(n+1) + diphosphate. Functionally, RNA-dependent RNA polymerase that plays an essential role in the virus replication. This Chenopodium amaranticolor (Quinoa) protein is RNA-directed RNA polymerase.